The sequence spans 170 residues: MIIYKCIISGDEMFSDAFKVKESANGIFYEVDGKITTRTDNIDDSLISANASAEETTDCTDSSVVSGVDIVLNHKLQETSFDKKSYKVYIKDYVKAIKQKLQEEKPERVDAFMADVAEEVKEILNNLKNYQFFTGENMNPEGMVGLLDYREDGTTPYMLFFKDGLLAEKC.

Residues 1-170 (MIIYKCIISG…FKDGLLAEKC (170 aa)) form the TCTP domain.

This sequence belongs to the TCTP family.

The protein localises to the cytoplasm. Its function is as follows. Involved in calcium binding and microtubule stabilization. In Lateolabrax japonicus (Japanese sea perch), this protein is Translationally-controlled tumor protein homolog (tpt1).